The primary structure comprises 696 residues: D-(-)-3-hydroxybutyrate oligomer hydrolase (696 aa).

An N-terminal signal peptide occupies residues 1–26 (MDTHGWGSRILVGAALAALTMLGACN). The active-site Charge relay system is Ser309.

Belongs to the D-(-)-3-hydroxybutyrate oligomer hydrolase family.

Its subcellular location is the secreted. The catalysed reaction is (3R)-hydroxybutanoate dimer + H2O = 2 (R)-3-hydroxybutanoate + H(+). The protein operates within lipid metabolism; butanoate metabolism. Participates in the degradation of poly-3-hydroxybutyrate (PHB). It works downstream of poly(3-hydroxybutyrate) depolymerase, hydrolyzing D(-)-3-hydroxybutyrate oligomers of various length (3HB-oligomers) into 3HB-monomers. In Burkholderia vietnamiensis (strain G4 / LMG 22486) (Burkholderia cepacia (strain R1808)), this protein is D-(-)-3-hydroxybutyrate oligomer hydrolase.